The chain runs to 245 residues: Thiopurine S-methyltransferase (245 aa).

S14 is subject to Phosphoserine. 29–40 is a binding site for S-adenosyl-L-methionine; sequence WQDKWVNGNTAF. F40 is a substrate binding site. K58 carries the N6-acetyllysine modification. S-adenosyl-L-methionine-binding positions include L69, E90, 134–135, and R152; that span reads SI.

It belongs to the class I-like SAM-binding methyltransferase superfamily. TPMT family. Monomer.

The protein localises to the cytoplasm. It catalyses the reaction S-adenosyl-L-methionine + a thiopurine = S-adenosyl-L-homocysteine + a thiopurine S-methylether.. The polypeptide is Thiopurine S-methyltransferase (TPMT) (Pongo pygmaeus (Bornean orangutan)).